The following is a 209-amino-acid chain: Uracil phosphoribosyltransferase (209 aa).

5-phospho-alpha-D-ribose 1-diphosphate-binding positions include Arg-79, Arg-104, and 131–139 (DPMLATGGS). Uracil is bound by residues Ile-194 and 199-201 (GDA). Asp-200 is a 5-phospho-alpha-D-ribose 1-diphosphate binding site.

It belongs to the UPRTase family. Mg(2+) serves as cofactor.

It catalyses the reaction UMP + diphosphate = 5-phospho-alpha-D-ribose 1-diphosphate + uracil. The protein operates within pyrimidine metabolism; UMP biosynthesis via salvage pathway; UMP from uracil: step 1/1. Allosterically activated by GTP. Catalyzes the conversion of uracil and 5-phospho-alpha-D-ribose 1-diphosphate (PRPP) to UMP and diphosphate. This Clostridium beijerinckii (strain ATCC 51743 / NCIMB 8052) (Clostridium acetobutylicum) protein is Uracil phosphoribosyltransferase.